Here is a 366-residue protein sequence, read N- to C-terminus: MSETHTSDETEARDQLLAIAEQFYDQFADGDIPRMSLPTRSKSNIEYDEDADVWVYGDSQSTRSANSVRGARKLLKSVYTVDFLAQQLDEGRSSTLRELYYLSESWDEAEAQFNDQSESDKLVEDLEIVSGVKREDFHMRPEESGAKVMGPLRLREQTRRGDREIHCQEDVGQGGYQIPNNPDTIDFLDTDADFVLCVETGGMRDRLVENGFDDDYNAIVVHLGGQPARATRRLTKRLHDELDLPVTVFTDGDPWSYRIYGSVAYGSIKSAHLSEYLATPQAQFIGIRPQDIVDYDLPTDPLSDSDVNALESELEDPRFQSDFWTEQIGLQLDIDKKAEQQALASRGLDFVTDTYLPERLAEMGVL.

The 140-residue stretch at 7-146 folds into the Topo IIA-type catalytic domain; the sequence is SDETEARDQL…FHMRPEESGA (140 aa). Residue Y101 is the O-(5'-phospho-DNA)-tyrosine intermediate of the active site. Mg(2+) contacts are provided by E199 and D251.

It belongs to the TOP6A family. As to quaternary structure, homodimer. Heterotetramer of two Top6A and two Top6B chains. Mg(2+) serves as cofactor.

The enzyme catalyses ATP-dependent breakage, passage and rejoining of double-stranded DNA.. Functionally, relaxes both positive and negative superturns and exhibits a strong decatenase activity. The chain is Type 2 DNA topoisomerase 6 subunit A from Halobacterium salinarum (strain ATCC 700922 / JCM 11081 / NRC-1) (Halobacterium halobium).